A 357-amino-acid polypeptide reads, in one-letter code: Gene 58 protein (357 aa).

The protein belongs to the herpesviridae BMRF2 family.

The sequence is that of Gene 58 protein (58) from Saimiri sciureus (Common squirrel monkey).